The chain runs to 1028 residues: MEMSSKRKHSSGPISLRSTKHLRSDTAASPQPLTPDDQTLGEEAVYVLDNEDEDLSHVLPLAPAAAAQTDSPEWQATIETVVKSVVSIHFCQTASFDTDLSMSSQATGFVVDAEKGYILTNRHVVCAGPFWGYCIFDNHEECDVRPVYRDPVHDFGILKFDPAAIKYMPVTELKLSPDAAKVGVEIRVVGNDAGEKLSILSGVISRLDRNAPEYGEGYSDFNTNYIQAAAAASGGSSGSPVVNIDGHAIALQAGGRADGAATDYFLPLDRPLRALECIRKGVPVTRGTIQTQWIIKPFDECRRLGLSPEWEAAVRKGSPKETGMLVAEIVLPEGPGDGKLQEGDVLIKVNGELLTQFVKLDAILDSSVGKDVHLLVQRGGEDLEVSCTVGDLHAITPARYVTVAGATFHDLSYQQARLYAIACKGVYVCEAAGSFKLENTFSGWIVDTVDKRPTKNLDEFIEVMKTIPDRARVALSYRHIRDLHTRGTSIVHIDRHWHPHIREAIRNDETGLWDFTNIADPLPAEPPVPRKADFIQLDGANHPAAADIVRSFVRVSCTMPVKLDGYPQARKAGFGLVVDAEAGLVLVSRAIVPFDLCDINVTVADSIIVMAKVIFLHPLQNYTIIQYDPSLVQAPVKTARLSTNYIKQGADTIFVGFNQNFRIVVAKTAVTDITTVAIPPNAAAPRYRALNLDAITVDTGLSSQCSNGVLIGEDGIVQALWLNYLGERTASSHKDVEYHLGLATPSLLPIINQIESGSLPKLRIMDMESYVIQMSQARIMGVSEEWIEKVAIANPARHELFMVRKVDCASPLTEDTHQLEEGDIILTLNDKLITRVSEFDIMYHHETLDALIVRNGQEMRVNIKTVPTEDLETDRALIFCGAVLQKPHHAVRQQISKLHSEVYVSARSRGSPAYQYGLSPTNFITAVNGVKTPDLDSFIKQVNVIPNNTYFRLRAVTFDNVPWVVTMKKNDHYFPMSEYIKDPSAPEGWRSISHDKELLRLDSDNLNADAMDEGRDDGISDMEPDGEK.

Positions 1–10 are enriched in basic residues; sequence MEMSSKRKHS. Residues 1 to 39 are disordered; it reads MEMSSKRKHSSGPISLRSTKHLRSDTAASPQPLTPDDQT. A serine protease region spans residues 85–269; sequence VVSIHFCQTA…AATDYFLPLD (185 aa). Active-site charge relay system residues include His123, Asp154, and Ser236. 2 consecutive PDZ domains span residues 292 to 377 and 878 to 959; these read QWII…LLVQ and IFCG…VTFD. Residues 1003–1028 are disordered; the sequence is SDNLNADAMDEGRDDGISDMEPDGEK. Positions 1019–1028 are enriched in acidic residues; that stretch reads ISDMEPDGEK.

The protein belongs to the peptidase S1C family.

The protein resides in the nucleus. Nuclear serine protease which mediates apoptosis. The chain is Pro-apoptotic serine protease NMA111 (NMA111) from Ajellomyces capsulatus (strain NAm1 / WU24) (Darling's disease fungus).